Reading from the N-terminus, the 88-residue chain is Meiosis expressed gene 1 protein homolog (88 aa).

It belongs to the MEIG1 family. In terms of assembly, interacts with PACRG. Interacts with MORN3.

Essential for spermiogenesis. The protein is Meiosis expressed gene 1 protein homolog of Homo sapiens (Human).